The chain runs to 593 residues: Mitoguardin 2 (593 aa).

Helical transmembrane passes span 11–31 (MIQA…TTFG) and 42–62 (PGLR…ALAA). Disordered regions lie at residues 98–134 (PSVK…HSGS), 150–171 (TAAC…TTDG), and 197–229 (VGQR…PESQ). Low complexity-rich tracts occupy residues 106–116 (SRRVQSPSSKS) and 124–134 (SSIEPSKHSGS). Phosphoserine is present on serine 132. Residues 205–218 (STPTPGDSLQNPDT) show a composition bias toward polar residues. Residue threonine 206 is modified to Phosphothreonine. Residues serine 220, serine 224, and serine 228 each carry the phosphoserine modification. Phosphothreonine is present on threonine 273. 2 positions are modified to phosphoserine: serine 276 and serine 295. The FFAT signature appears at 292 to 298 (SFFSATE).

This sequence belongs to the mitoguardin family. Homodimer and heterodimer; forms heterodimers with MIGA1. Interacts with PLD6/MitoPLD. Interacts (via phosphorylated FFAT motif) with MOSPD2. Post-translationally, phosphorylation at Ser-295 of the FFAT motif activates interaction with MOSPD2.

It localises to the mitochondrion outer membrane. Functionally, regulator of mitochondrial fusion. Acts by forming homo- and heterodimers at the mitochondrial outer membrane and facilitating the formation of PLD6/MitoPLD dimers. May act by regulating phospholipid metabolism via PLD6/MitoPLD. The protein is Mitoguardin 2 of Mus musculus (Mouse).